Consider the following 134-residue polypeptide: Profilin-2 (134 aa).

An intrachain disulfide couples C13 to C118. Positions 84–100 (AVIRGKKGSGGITIKKT) match the Involved in PIP2 interaction motif. Phosphothreonine is present on T114.

This sequence belongs to the profilin family. In terms of assembly, occurs in many kinds of cells as a complex with monomeric actin in a 1:1 ratio. Phosphorylated by MAP kinases.

It is found in the cytoplasm. It localises to the cytoskeleton. Binds to actin and affects the structure of the cytoskeleton. At high concentrations, profilin prevents the polymerization of actin, whereas it enhances it at low concentrations. This is Profilin-2 from Olea europaea (Common olive).